Reading from the N-terminus, the 453-residue chain is Ribosomal protein uS12 methylthiotransferase RimO (453 aa).

Residues 5 to 120 (PKVGFVSLGC…VMQAVHSHLP (116 aa)) form the MTTase N-terminal domain. [4Fe-4S] cluster is bound by residues C14, C50, C79, C151, C155, and C158. In terms of domain architecture, Radical SAM core spans 137-382 (LTPRHYAYLK…MEVAEEVSAN (246 aa)). Residues 385 to 453 (QRKVGKTLKV…ADGHDLWGEV (69 aa)) enclose the TRAM domain.

It belongs to the methylthiotransferase family. RimO subfamily. Requires [4Fe-4S] cluster as cofactor.

It localises to the cytoplasm. The catalysed reaction is L-aspartate(89)-[ribosomal protein uS12]-hydrogen + (sulfur carrier)-SH + AH2 + 2 S-adenosyl-L-methionine = 3-methylsulfanyl-L-aspartate(89)-[ribosomal protein uS12]-hydrogen + (sulfur carrier)-H + 5'-deoxyadenosine + L-methionine + A + S-adenosyl-L-homocysteine + 2 H(+). Its function is as follows. Catalyzes the methylthiolation of an aspartic acid residue of ribosomal protein uS12. The sequence is that of Ribosomal protein uS12 methylthiotransferase RimO from Burkholderia lata (strain ATCC 17760 / DSM 23089 / LMG 22485 / NCIMB 9086 / R18194 / 383).